We begin with the raw amino-acid sequence, 674 residues long: MLSSTFVRTKAGRSKPVRLTAVIAAALFLAGCPSQAPQTPPANIQDEASASSDYYLQQLQQSSNDNKADWQLLAIRALLREGKLPQASEQLNQLPKNLSSVQQVESQLLTAELQVANKSYVSARSTLGHIDSGSLSANQLVRFYQAQIAVNQGKASLPLIRAYIAQEPLLTGKAHQNNLDQTWQSLLQLTPQDMNSLVINANENVLQGWLDLLRVYQDNKQDPDLLKAGIKDWQNRYPQNPAAKTLPTQLNQVLHFTQASTSKIALLLPLNGQAKVFADAIQKGFEAAKNGVTPSTPVQQQQPASVPEQAAQPASTDPNANGAVSTSAPDAAPVTAAQPSAPSTAPITPPQAANAQIKVYDTSSQPLAALLTQAQQDGATLVVGPLLKENVDQLASSTTTLNVLALNQPETPKDNPNICYFALSPEDEARDAARHIWEQQKRQPLLLIPRGAFGDRVAKAFNQEWQKLGGQTVLQQGIGSASELRQMVNSGGIRMSGTPISTAPAPQAVTIAGLTIPAPPSDTPATSGGSVDSVYIVATQSQLTLIKPMIDMATNSRSKPAMYASSRSYQAGAGPDFRLEMEGLQFSDIPLLAGANPQLLQQASSQFRNDYSLVRLYAMGMDAWTLSNHFAEMRQLPGFQVSGTTGVLTAAPGCVINRKLPWLQYRQGTVVPVS.

The first 31 residues, methionine 1–glycine 31, serve as a signal peptide directing secretion. Cysteine 32 carries the N-palmitoyl cysteine lipid modification. The S-diacylglycerol cysteine moiety is linked to residue cysteine 32. Positions glycine 291–proline 349 are disordered. The span at valine 292–serine 315 shows a compositional bias: low complexity. Residues threonine 316–alanine 328 show a composition bias toward polar residues. The segment covering alanine 331–proline 349 has biased composition (low complexity).

Belongs to the LpoA family. As to quaternary structure, interacts with PBP1a.

The protein resides in the cell outer membrane. Functionally, regulator of peptidoglycan synthesis that is essential for the function of penicillin-binding protein 1A (PBP1a). The sequence is that of Penicillin-binding protein activator LpoA from Serratia proteamaculans (strain 568).